Reading from the N-terminus, the 72-residue chain is Mitotic-spindle organizing protein 1 (72 aa).

This sequence belongs to the MOZART1 family. Part of the gamma-tubulin complex.

It localises to the cytoplasm. The protein localises to the cytoskeleton. The protein resides in the microtubule organizing center. Its subcellular location is the spindle pole body. In terms of biological role, required for gamma-tubulin complex recruitment to the microtubule organizing center (MTOC). This chain is Mitotic-spindle organizing protein 1, found in Coccidioides immitis (strain RS) (Valley fever fungus).